A 178-amino-acid chain; its full sequence is ATP-dependent protease subunit HslV (178 aa).

Residue Thr-7 is part of the active site. Na(+)-binding residues include Gly-162, Cys-165, and Thr-168.

Belongs to the peptidase T1B family. HslV subfamily. As to quaternary structure, a double ring-shaped homohexamer of HslV is capped on each side by a ring-shaped HslU homohexamer. The assembly of the HslU/HslV complex is dependent on binding of ATP.

It localises to the cytoplasm. The catalysed reaction is ATP-dependent cleavage of peptide bonds with broad specificity.. With respect to regulation, allosterically activated by HslU binding. Protease subunit of a proteasome-like degradation complex believed to be a general protein degrading machinery. This Cupriavidus metallidurans (strain ATCC 43123 / DSM 2839 / NBRC 102507 / CH34) (Ralstonia metallidurans) protein is ATP-dependent protease subunit HslV.